We begin with the raw amino-acid sequence, 325 residues long: Delta(1)-pyrroline-2-carboxylate reductase (325 aa).

This sequence belongs to the ornithine cyclodeaminase/mu-crystallin family.

It carries out the reaction L-proline + NAD(+) = 1-pyrroline-2-carboxylate + NADH + H(+). The enzyme catalyses L-proline + NADP(+) = 1-pyrroline-2-carboxylate + NADPH + H(+). Catalyzes the reduction of Delta(1)-pyrroline-2-carboxylate (Pyr2C) to L-proline, using preferentially NADPH over NADH as the electron donor. Is likely involved in a degradation pathway that converts trans-3-hydroxy-L-proline (t3LHyp) to L-proline. This is Delta(1)-pyrroline-2-carboxylate reductase from Bacillus cereus (strain ATCC 10987 / NRS 248).